Here is a 381-residue protein sequence, read N- to C-terminus: Cytosolic acyl coenzyme A thioester hydrolase (381 aa).

The 119-residue stretch at 51–169 (LGHCVTMGRI…TLWYVPLSLK (119 aa)) folds into the HotDog ACOT-type 1 domain. The active site involves asparagine 67. Residues lysine 169 and lysine 199 each carry the N6-acetyllysine modification. Residues 225-339 (SYSQSSLIHL…FFTYVSLNQE (115 aa)) form the HotDog ACOT-type 2 domain. Aspartate 256 is an active-site residue. At lysine 284 the chain carries N6-acetyllysine. Residues 342–381 (PMPVPQLVPETEDEKKRFEEGKGRYLQMKAKRQGHTEPQP) form a disordered region. The span at 354–364 (DEKKRFEEGKG) shows a compositional bias: basic and acidic residues.

As to quaternary structure, homohexamer. Widely expressed with highest levels in brain. High levels also found in thymus, large intestine and testis. Negligible in muscle and adipose tissue. In the central and peripheral nervous systems, displays a predominantly neuronal localization with highest expression in cell bodies and neurites.

The protein resides in the cytoplasm. The protein localises to the cytosol. The enzyme catalyses hexadecanoyl-CoA + H2O = hexadecanoate + CoA + H(+). The catalysed reaction is dodecanoyl-CoA + H2O = dodecanoate + CoA + H(+). It catalyses the reaction tetradecanoyl-CoA + H2O = tetradecanoate + CoA + H(+). It carries out the reaction decanoyl-CoA + H2O = decanoate + CoA + H(+). The enzyme catalyses octanoyl-CoA + H2O = octanoate + CoA + H(+). The catalysed reaction is octadecanoyl-CoA + H2O = octadecanoate + CoA + H(+). It catalyses the reaction (9Z)-octadecenoyl-CoA + H2O = (9Z)-octadecenoate + CoA + H(+). It participates in lipid metabolism; fatty acid metabolism. Functionally, catalyzes the hydrolysis of acyl-CoAs into free fatty acids and coenzyme A (CoASH), regulating their respective intracellular levels. Preferentially hydrolyzes palmitoyl-CoA, but has a broad specificity acting on other fatty acyl-CoAs with chain-lengths of C8-C18. May play an important physiological function in brain. The chain is Cytosolic acyl coenzyme A thioester hydrolase (Acot7) from Mus musculus (Mouse).